A 759-amino-acid chain; its full sequence is Glycerophosphodiester phosphodiesterase GDPDL3 (759 aa).

Positions 1–27 (MRGLLRASSLLLCGVILIQLLAAQIHA) are cleaved as a signal peptide. The Extracellular portion of the chain corresponds to 28–738 (QSKKPKSPWP…TNAQAPSGQT (711 aa)). Residues 44-344 (PLVIARGGFS…DFPITASASL (301 aa)) enclose the GP-PDE 1 domain. Asn-99, Asn-186, Asn-242, Asn-251, Asn-326, Asn-353, Asn-413, Asn-424, Asn-488, Asn-528, Asn-540, and Asn-647 each carry an N-linked (GlcNAc...) asparagine glycan. One can recognise a GP-PDE 2 domain in the interval 360 to 661 (FLVITKDGAS…EFPFTAARYK (302 aa)). The segment at 702 to 734 (FTDADVTEPPLPPVTAKAPTSSPGTPSTNAQAP) is disordered. Residues 719 to 734 (APTSSPGTPSTNAQAP) are compositionally biased toward polar residues. Residues 739–759 (RITLSLLLSVFAMVLASLLLL) form a helical membrane-spanning segment.

The protein belongs to the glycerophosphoryl diester phosphodiesterase family. In terms of tissue distribution, expressed in roots, shoots, rosette and cauline leaves, stems, flowers and siliques.

It localises to the cell membrane. It catalyses the reaction a sn-glycero-3-phosphodiester + H2O = an alcohol + sn-glycerol 3-phosphate + H(+). Involved in primary cell wall organization. Required for the accumulation of crystalline cellulose. The sequence is that of Glycerophosphodiester phosphodiesterase GDPDL3 from Arabidopsis thaliana (Mouse-ear cress).